A 791-amino-acid polypeptide reads, in one-letter code: Primase D5 (791 aa).

The active site involves Asp174. Positions 346–471 are primase; sequence SDRGEYLVWL…ELMSILDDIQ (126 aa). The SF3 helicase domain maps to 479–641; that stretch reads ENRELYEQIL…FTNTKKKVHN (163 aa). Position 505 to 512 (505 to 512) interacts with ATP; the sequence is GETATGKS.

Belongs to the poxviridae D5 family. As to quaternary structure, interacts with A20.

Primase which may have roles in initiation of DNA replication or lagging-strand synthesis. The chain is Primase D5 from Fowlpox virus (strain NVSL) (FPV).